Here is a 512-residue protein sequence, read N- to C-terminus: Glycerol kinase (512 aa).

ADP is bound at residue Thr-13. Residues Thr-13, Thr-14, and Ser-15 each contribute to the ATP site. A sn-glycerol 3-phosphate-binding site is contributed by Thr-13. Arg-17 is an ADP binding site. Sn-glycerol 3-phosphate-binding residues include Arg-83, Glu-84, Tyr-135, and Asp-252. The glycerol site is built by Arg-83, Glu-84, Tyr-135, Asp-252, and Gln-253. Thr-274 and Gly-318 together coordinate ADP. ATP contacts are provided by Thr-274, Gly-318, Gln-322, and Gly-419. Gly-419 and Asn-423 together coordinate ADP.

This sequence belongs to the FGGY kinase family.

The enzyme catalyses glycerol + ATP = sn-glycerol 3-phosphate + ADP + H(+). It participates in polyol metabolism; glycerol degradation via glycerol kinase pathway; sn-glycerol 3-phosphate from glycerol: step 1/1. Its activity is regulated as follows. Inhibited by fructose 1,6-bisphosphate (FBP). In terms of biological role, key enzyme in the regulation of glycerol uptake and metabolism. Catalyzes the phosphorylation of glycerol to yield sn-glycerol 3-phosphate. In Corynebacterium kroppenstedtii (strain DSM 44385 / JCM 11950 / CIP 105744 / CCUG 35717), this protein is Glycerol kinase.